Reading from the N-terminus, the 343-residue chain is Phenylalanine--tRNA ligase alpha subunit (343 aa).

Position 258 (Glu-258) interacts with Mg(2+).

The protein belongs to the class-II aminoacyl-tRNA synthetase family. Phe-tRNA synthetase alpha subunit type 1 subfamily. Tetramer of two alpha and two beta subunits. The cofactor is Mg(2+).

The protein localises to the cytoplasm. It catalyses the reaction tRNA(Phe) + L-phenylalanine + ATP = L-phenylalanyl-tRNA(Phe) + AMP + diphosphate + H(+). The protein is Phenylalanine--tRNA ligase alpha subunit of Symbiobacterium thermophilum (strain DSM 24528 / JCM 14929 / IAM 14863 / T).